Reading from the N-terminus, the 345-residue chain is Biotin synthase (345 aa).

The Radical SAM core domain occupies 67–295 (YKVQLASLLS…KSRIRLSAGR (229 aa)). Residues C82, C86, and C89 each coordinate [4Fe-4S] cluster. Positions 126, 158, 218, and 290 each coordinate [2Fe-2S] cluster.

This sequence belongs to the radical SAM superfamily. Biotin synthase family. Homodimer. The cofactor is [4Fe-4S] cluster. Requires [2Fe-2S] cluster as cofactor.

The catalysed reaction is (4R,5S)-dethiobiotin + (sulfur carrier)-SH + 2 reduced [2Fe-2S]-[ferredoxin] + 2 S-adenosyl-L-methionine = (sulfur carrier)-H + biotin + 2 5'-deoxyadenosine + 2 L-methionine + 2 oxidized [2Fe-2S]-[ferredoxin]. It participates in cofactor biosynthesis; biotin biosynthesis; biotin from 7,8-diaminononanoate: step 2/2. In terms of biological role, catalyzes the conversion of dethiobiotin (DTB) to biotin by the insertion of a sulfur atom into dethiobiotin via a radical-based mechanism. In Prochlorococcus marinus (strain NATL2A), this protein is Biotin synthase.